A 553-amino-acid polypeptide reads, in one-letter code: Arginine--tRNA ligase (553 aa).

Positions A122 to H132 match the 'HIGH' region motif.

This sequence belongs to the class-I aminoacyl-tRNA synthetase family. Monomer.

The protein localises to the cytoplasm. It catalyses the reaction tRNA(Arg) + L-arginine + ATP = L-arginyl-tRNA(Arg) + AMP + diphosphate. This is Arginine--tRNA ligase from Mesoplasma florum (strain ATCC 33453 / NBRC 100688 / NCTC 11704 / L1) (Acholeplasma florum).